Here is a 515-residue protein sequence, read N- to C-terminus: Microtubule-associated protein 70-4 (515 aa).

Coiled coils occupy residues 26 to 106 (VVDE…ALSA) and 136 to 351 (LESD…NTSA). Residues 208–410 (LLEKSNRQQV…KQPGSETEAA (203 aa)) form a required for targeting to microtubules region. A disordered region spans residues 340 to 515 (DDMRNESSNT…VKSTKDSCEI (176 aa)). Over residues 345–362 (ESSNTSASNKDNATSKQA) the composition is skewed to polar residues. Low complexity predominate over residues 364–374 (PKRSSSQPRRP). Composition is skewed to basic and acidic residues over residues 409–425 (AAEK…DSPR), 450–461 (KVADDAGKENKE), and 484–515 (SEHE…SCEI).

This sequence belongs to the MAP70 family.

It is found in the cytoplasm. It localises to the cytoskeleton. Functionally, plant-specific protein that interact with microtubules. This Oryza sativa subsp. japonica (Rice) protein is Microtubule-associated protein 70-4 (MAP70.4).